A 318-amino-acid polypeptide reads, in one-letter code: Protein W (318 aa).

Disordered regions lie at residues 1–23 (MDQDAFILKEDSEVEREAPGGRE) and 38–318 (SEPT…KKGA). A compositionally biased stretch (basic and acidic residues) spans 7–20 (ILKEDSEVEREAPG). Residues 50–59 (LHNTINTPQG) show a composition bias toward polar residues. Phosphoserine; by host is present on Ser68. Basic and acidic residues predominate over residues 83 to 101 (RSGEESRVSGRTSKPEAEA). Ser125 carries the phosphoserine; by host modification. Residues 150-168 (GIEDENREMAAHPDKRGED) are compositionally biased toward basic and acidic residues. The span at 191 to 206 (ASNNGRSMEPGSSHSA) shows a compositional bias: polar residues. Phosphoserine; by host occurs at positions 192, 249, 257, and 260.

This Sendai virus (strain Harris) (SeV) protein is Protein W (P/V/C).